Consider the following 50-residue polypeptide: Putative protein HokG (50 aa).

The helical transmembrane segment at 5-25 (YALVAIIVLCCTVLGFTLMVG) threads the bilayer.

Belongs to the Hok/Gef family.

The protein localises to the cell inner membrane. In terms of biological role, toxic component of a type I toxin-antitoxin (TA) system. When overexpressed kills cells within minutes; causes collapse of the transmembrane potential and arrest of respiration. Its toxic effect is probably neutralized by an antisense antitoxin Sok RNA. This Escherichia coli O157:H7 protein is Putative protein HokG (hokG).